The sequence spans 297 residues: SH2 domain-containing protein 6 (297 aa).

Disordered stretches follow at residues 1-61 and 74-93; these read MSCP…FPTR and MNPQPAKQGPVFGRQGRGTS. Residues 36–45 show a composition bias toward pro residues; the sequence is PSKPPLPPPQ. One can recognise an SH2 domain in the interval 187-295; it reads WYSGNCDRQS…RGLTYLRFPT (109 aa).

In Mus musculus (Mouse), this protein is SH2 domain-containing protein 6 (Sh2d6).